A 212-amino-acid chain; its full sequence is External core antigen (212 aa).

The signal sequence occupies residues 1–19; the sequence is MQLFHLCLIIFCSCPTVQA. The segment at 25 to 27 is HBEAG; it reads GWL. The tract at residues 165-212 is disordered; that stretch reads NAPILSTLPETTVVRQRGRAPRRRTPSPRRRRSQSPRRRRSQSPASQC. Residues 180–205 are compositionally biased toward basic residues; sequence QRGRAPRRRTPSPRRRRSQSPRRRRS. The 1; half-length repeat unit spans residues 184–190; sequence APRRRTP. The 3 X 8 AA repeats of S-P-R-R-R-R-S-Q stretch occupies residues 184–206; the sequence is APRRRTPSPRRRRSQSPRRRRSQ. Positions 184–212 are excised as a propeptide; it reads APRRRTPSPRRRRSQSPRRRRSQSPASQC. A run of 2 repeats spans residues 191–198 and 199–206.

This sequence belongs to the orthohepadnavirus precore antigen family. Homodimerizes. In terms of processing, phosphorylated. Cleaved by host furin.

It is found in the secreted. It localises to the host nucleus. In terms of biological role, may regulate immune response to the intracellular capsid in acting as a T-cell tolerogen, by having an immunoregulatory effect which prevents destruction of infected cells by cytotoxic T-cells. This immune regulation may predispose to chronicity during perinatal infections and prevent severe liver injury during adult infections. In Hepatitis B virus genotype H subtype adw4 (isolate Nicaragua/2928Nic/1997) (HBV-H), this protein is External core antigen.